Here is a 928-residue protein sequence, read N- to C-terminus: Nuclear pore complex-interacting protein family member B12 (928 aa).

The chain crosses the membrane as a helical span at residues Val-73–Ser-93. 2 disordered regions span residues Arg-242–Thr-452 and Glu-663–Ser-928. A compositionally biased stretch (polar residues) spans Gln-252–Leu-263. Residues Pro-349–Pro-359 show a composition bias toward pro residues. Composition is skewed to basic and acidic residues over residues Asp-406–Arg-416, Asp-698–Arg-708, Asp-740–Arg-750, and Asp-782–Arg-792.

This sequence belongs to the NPIP family.

The protein localises to the membrane. This chain is Nuclear pore complex-interacting protein family member B12, found in Homo sapiens (Human).